The primary structure comprises 167 residues: General odorant-binding protein 1 (167 aa).

The signal sequence occupies residues 1 to 22 (MAHTLQTVVLLLGTSILHPILA). Intrachain disulfides connect Cys41-Cys76, Cys72-Cys130, and Cys119-Cys139.

This sequence belongs to the PBP/GOBP family. As to expression, antenna.

In terms of biological role, present in the aqueous fluid surrounding olfactory sensory dendrites and are thought to aid in the capture and transport of hydrophobic odorants into and through this fluid. The protein is General odorant-binding protein 1 of Antheraea pernyi (Chinese oak silk moth).